Reading from the N-terminus, the 654-residue chain is Fructose-1,6-bisphosphatase class 3 (654 aa).

It belongs to the FBPase class 3 family. Requires Mn(2+) as cofactor.

It carries out the reaction beta-D-fructose 1,6-bisphosphate + H2O = beta-D-fructose 6-phosphate + phosphate. It functions in the pathway carbohydrate biosynthesis; gluconeogenesis. This Staphylococcus epidermidis (strain ATCC 35984 / DSM 28319 / BCRC 17069 / CCUG 31568 / BM 3577 / RP62A) protein is Fructose-1,6-bisphosphatase class 3.